The following is a 317-amino-acid chain: MPLQGPQRRLLGSLNSTLPATPYLGLTTNQTEPPCLEVSIPDGLFLSLGLVSLVENVLVVTAIAKNRNLHSPMYYFICCLAVSDLLVSMSNVLEMAILLLLEAGVLATQASVLQQLDNIIDVLICGSMVSSLCFLGSIAVDRYISIFYALRYHSIMMLPRVWRAIVAIWVVSVLSSTLFIAYYNHTAVLLCLVTFFVAMLVLMAVLYVHMLARACQHARGIARLHKRQHPIHQGFGLKGAATLTILLGVFFLCWGPFFLHLSLLILCPQHPTCGCVFKNFKLFLTLILCSAIVDPLIYAFRSQELRKTLQEVLLCSW.

The Extracellular segment spans residues 1–37 (MPLQGPQRRLLGSLNSTLPATPYLGLTTNQTEPPCLE). A glycan (N-linked (GlcNAc...) asparagine) is linked at N29. A helical transmembrane segment spans residues 38–63 (VSIPDGLFLSLGLVSLVENVLVVTAI). The Cytoplasmic segment spans residues 64 to 72 (AKNRNLHSP). Residues 73 to 93 (MYYFICCLAVSDLLVSMSNVL) form a helical membrane-spanning segment. The Extracellular segment spans residues 94 to 118 (EMAILLLLEAGVLATQASVLQQLDN). A helical transmembrane segment spans residues 119–140 (IIDVLICGSMVSSLCFLGSIAV). The Cytoplasmic portion of the chain corresponds to 141–163 (DRYISIFYALRYHSIMMLPRVWR). A helical transmembrane segment spans residues 164–183 (AIVAIWVVSVLSSTLFIAYY). At 184 to 191 (NHTAVLLC) the chain is on the extracellular side. The helical transmembrane segment at 192–211 (LVTFFVAMLVLMAVLYVHML) threads the bilayer. Residues 212–240 (ARACQHARGIARLHKRQHPIHQGFGLKGA) are Cytoplasmic-facing. The chain crosses the membrane as a helical span at residues 241–266 (ATLTILLGVFFLCWGPFFLHLSLLIL). The Extracellular portion of the chain corresponds to 267-279 (CPQHPTCGCVFKN). Residues 280 to 300 (FKLFLTLILCSAIVDPLIYAF) traverse the membrane as a helical segment. At 301–317 (RSQELRKTLQEVLLCSW) the chain is on the cytoplasmic side. Residue C315 is the site of S-palmitoyl cysteine attachment.

It belongs to the G-protein coupled receptor 1 family. In terms of assembly, interacts with MGRN1, but does not undergo MGRN1-mediated ubiquitination; this interaction competes with GNAS-binding and thus inhibits agonist-induced cAMP production. Interacts with OPN3; the interaction results in a decrease in MC1R-mediated cAMP signaling and ultimately a decrease in melanin production in melanocytes.

The protein localises to the cell membrane. In terms of biological role, receptor for MSH (alpha, beta and gamma) and ACTH. The activity of this receptor is mediated by G proteins which activate adenylate cyclase. Mediates melanogenesis, the production of eumelanin (black/brown) and phaeomelanin (red/yellow), via regulation of cAMP signaling in melanocytes. This chain is Melanocyte-stimulating hormone receptor (MC1R), found in Equus caballus (Horse).